A 553-amino-acid chain; its full sequence is Phenylalanine--tRNA ligase beta subunit (553 aa).

In terms of domain architecture, B5 spans 273–349; the sequence is FNVRNIDIEV…RAFGYNNITP (77 aa). Residues D327, D333, D336, and D337 each coordinate Mg(2+).

Belongs to the phenylalanyl-tRNA synthetase beta subunit family. Type 2 subfamily. As to quaternary structure, tetramer of two alpha and two beta subunits. It depends on Mg(2+) as a cofactor.

Its subcellular location is the cytoplasm. The catalysed reaction is tRNA(Phe) + L-phenylalanine + ATP = L-phenylalanyl-tRNA(Phe) + AMP + diphosphate + H(+). This Methanocella arvoryzae (strain DSM 22066 / NBRC 105507 / MRE50) protein is Phenylalanine--tRNA ligase beta subunit.